Here is an 817-residue protein sequence, read N- to C-terminus: Ribonuclease R 1 (817 aa).

The RNB domain maps to 259 to 584 (RVDYRNEITF…DLLVHRLIRE (326 aa)). An S1 motif domain is found at 637 to 717 (GEEYEGIIAS…MTGEIDFEYL (81 aa)). Residues 728-817 (AKAKKKPDHK…DGRKKPHKRG (90 aa)) are disordered. The segment covering 729–742 (KAKKKPDHKGRKKS) has biased composition (basic residues). Basic and acidic residues-rich tracts occupy residues 767-777 (RRADEKFEFDK) and 795-810 (KFTD…TDGR).

Belongs to the RNR ribonuclease family. RNase R subfamily.

It is found in the cytoplasm. The catalysed reaction is Exonucleolytic cleavage in the 3'- to 5'-direction to yield nucleoside 5'-phosphates.. Its function is as follows. 3'-5' exoribonuclease that releases 5'-nucleoside monophosphates and is involved in maturation of structured RNAs. The polypeptide is Ribonuclease R 1 (rnr1) (Lactococcus lactis subsp. lactis (strain IL1403) (Streptococcus lactis)).